We begin with the raw amino-acid sequence, 1058 residues long: Receptor-type guanylate cyclase gcy-22 (1058 aa).

The signal sequence occupies residues 1–23 (MSFISKCFICLLFSTYFLPPVNS). Over 25 to 470 (VLQVGFLAAN…PKSFTDQYLA (446 aa)) the chain is Extracellular. Asparagine 36, asparagine 73, asparagine 201, asparagine 215, asparagine 277, asparagine 302, asparagine 324, asparagine 350, and asparagine 386 each carry an N-linked (GlcNAc...) asparagine glycan. Residues 471 to 491 (IILGCTAAALVLIIAVISTIV) form a helical membrane-spanning segment. Residues 492-1058 (FLVRSKRQEE…IEAKENGESI (567 aa)) lie on the Cytoplasmic side of the membrane. Residues 501 to 809 (EERLNQLWQV…SSNLMDHVFN (309 aa)) enclose the Protein kinase domain. The stretch at 811-840 (LEQYASNLEDEVQARMKELTEEKKRSDVLL) forms a coiled coil. In terms of domain architecture, Guanylate cyclase spans 867–997 (TIFFSDVVSF…DSVNTASRME (131 aa)).

Belongs to the adenylyl cyclase class-4/guanylyl cyclase family. As to expression, expression in ASER neuron begins at an early larval stage and is maintained in the adult.

It is found in the cell membrane. It carries out the reaction GTP = 3',5'-cyclic GMP + diphosphate. Its function is as follows. Guanylate cyclase involved in the production of the second messenger cGMP. Regulates chemotaxis responses toward Li(1-), Mg(2+), Cl(1-), Br(1)- and I(1-) salt ions and methionine in ASE right (ASER) sensory neuron. May regulate ASER neuronal activity such as axon sprouting and calcium responses to changes in salt concentrations. The chain is Receptor-type guanylate cyclase gcy-22 from Caenorhabditis elegans.